The sequence spans 261 residues: tRNA pseudouridine synthase A (261 aa).

Asp-52 (nucleophile) is an active-site residue. A substrate-binding site is contributed by Tyr-110.

It belongs to the tRNA pseudouridine synthase TruA family. In terms of assembly, homodimer.

The enzyme catalyses uridine(38/39/40) in tRNA = pseudouridine(38/39/40) in tRNA. Formation of pseudouridine at positions 38, 39 and 40 in the anticodon stem and loop of transfer RNAs. The polypeptide is tRNA pseudouridine synthase A (Coxiella burnetii (strain CbuK_Q154) (Coxiella burnetii (strain Q154))).